The sequence spans 4473 residues: Plectin (4473 aa).

Calponin-homology (CH) domains are found at residues 1 to 74 and 87 to 192; these read DGHN…LHFQ and MTAK…DAMP. Residues 1–192 form an actin-binding region; it reads DGHNLISLLE…YVSSLYDAMP (192 aa). Residues 1–1259 are globular 1; it reads DGHNLISLLE…SELTTLTSQY (1259 aa). One copy of the Spectrin 1 repeat lies at 449 to 508; it reads RYLQDLLAWVEENQRRIDSAEWGVDLPSVEAQLGSHRGMHQSIEEFRAKIERARNDESQL. Ser509 carries the phosphoserine modification. 2 Spectrin repeats span residues 529–613 and 626–719; these read KLLN…REDH and LQTQ…AIVQ. Thr604 is subject to Phosphothreonine. The SH3 domain maps to 730–787; that stretch reads RGHVPLMAVCDYKQVEVTVHKGDQCQLVGPAQPSHWKVLRGPSSEAAVPSVCFLVPPP. A Phosphoserine modification is found at Ser836. The stretch at 1104–1204 is one Spectrin 4 repeat; it reads RERVNQLLER…QKFAKQYINA (101 aa). Ser1224 carries the phosphoserine modification. Positions 1258–2548 form a coiled coil; it reads QYIKFISETL…EEIAATQAAA (1291 aa). The tract at residues 1260–2544 is central fibrous rod domain; the sequence is IKFISETLRR…LAHSEEIAAT (1285 aa). 2 disordered regions span residues 1274-1293 and 1407-1434; these read ERLA…EGEA and RAEE…DESQ. Ser1510 carries the post-translational modification Phosphoserine. Lys1514 is subject to N6-acetyllysine. Disordered regions lie at residues 1529–1550, 1582–1616, 1881–1929, 1950–1971, and 2003–2098; these read VTQL…ERAR, SLAQ…RELA, AEDT…AARQ, LRER…AAQK, and ERLR…KHKK. Composition is skewed to basic and acidic residues over residues 1587–1616, 1881–1897, and 1905–1917; these read DAEK…RELA, AEDT…EAAR, and EEQR…ERVQ. Positions 1959-1968 are enriched in low complexity; that stretch reads ARQLQLAQEA. Over residues 2003–2047 the composition is skewed to basic and acidic residues; sequence ERLRGEAEAARRAAEEAEEAREQAEREAAQSRKQVEEAERLKQSA. The segment covering 2048–2061 has biased composition (low complexity); sequence EEQAQARAQAQAAA. Over residues 2062 to 2077 the composition is skewed to basic and acidic residues; the sequence is EKLRKEAEQEAARRAQ. A Phosphoserine modification is found at Ser2420. At Lys2425 the chain carries N6-acetyllysine. The interval 2457 to 2476 is disordered; sequence REEQQRQQRQMEQEKQELVA. The segment at 2545 to 4473 is globular 2; it reads QAAAAKALPN…SLGGPESAVA (1929 aa). 2 positions are modified to phosphoserine: Ser2563 and Ser2591. Plectin repeat units follow at residues 2615–2652, 2653–2690, 2691–2728, 2729–2766, and 2770–2804; these read RQYL…PGTA, LILL…PELH, HKLL…RDHA, IRLL…EEMS, and ADPG…PETG. Thr2675 is subject to Phosphothreonine. Tyr2822 bears the Phosphotyrosine mark. Lys2842 and Lys2880 each carry N6-acetyllysine. 5 Plectin repeats span residues 2905–2942, 2943–2980, 2981–3018, 3019–3056, and 3057–3094; these read ALVP…ADSV, RRAL…PDVA, VALL…PELH, EKLL…REQG, and LRLL…KETN. Tyr3151 is subject to Phosphotyrosine. Lys3209 is modified (N6-acetyllysine). Plectin repeat units lie at residues 3274 to 3311, 3312 to 3349, 3350 to 3387, 3388 to 3425, and 3429 to 3463; these read RTLL…PSTA, TLLL…PELH, EKLL…REHA, IRLL…EEMS, and ADPS…PETG. A Phosphothreonine modification is found at Thr3574. Position 3579 is a phosphotyrosine (Tyr3579). Plectin repeat units lie at residues 3609–3646, 3647–3684, 3685–3722, 3723–3760, 3764–3797, and 3800–3834; these read WRYL…AEVA, RLLL…PELH, DRLL…AEEA, LRLL…KDTH, SEPS…DGSG, and LLPL…EATA. A Phosphothreonine modification is found at Thr3819. At Ser3843 the chain carries Phosphoserine. Plectin repeat units follow at residues 3852–3889, 3890–3927, 3928–3965, 3966–4003, 4007–4041, and 4043–4094; these read QKFL…PGTA, FELL…PEFK, DRLL…KDHG, IRLL…EEMN, TDPS…PQTG, and RLLP…HQTY. The binding to intermediate filaments stretch occupies residues 4039–4089; that stretch reads QTGLRLLPLKEKKRERKTSSKSSVRKRRVVIVDPETSKEMSVYEAYRKGLI. Residues Ser4171, Ser4173, Ser4174, Ser4175, Ser4178, Ser4179, Ser4180, and Ser4181 each carry the phosphoserine modification. A Phosphotyrosine modification is found at Tyr4182. Ser4185, Ser4189, and Ser4195 each carry phosphoserine. Plectin repeat units follow at residues 4197 to 4234, 4235 to 4272, 4273 to 4310, 4311 to 4348, and 4349 to 4386; these read SDPT…NITG, QRLL…KIMV, DRIN…YEAG, QRFL…ARTA, and QKLR…EGTG. Phosphothreonine is present on Thr4200. Phosphothreonine; by CDK1 is present on Thr4328. Residues Ser4396 and Ser4402 each carry the phosphoserine modification. Positions 4400–4460 are enriched in low complexity; it reads YYSPYSVSGS…SGYGRRYASG (61 aa). Residues 4400-4473 form a disordered region; that stretch reads YYSPYSVSGS…SLGGPESAVA (74 aa). Residue Tyr4404 is modified to Phosphotyrosine. Phosphoserine occurs at positions 4405, 4407, and 4411. Position 4412 is a phosphothreonine (Thr4412). The interval 4414–4429 is 4 X 4 AA tandem repeats of G-S-R-X; it reads GSRTGSRTGSRAGSRR. At Ser4415 the chain carries Phosphoserine. Arg4416 and Arg4429 each carry omega-N-methylarginine. Phosphoserine is present on residues Ser4431 and Ser4464.

The protein belongs to the plakin or cytolinker family. Homodimer or homotetramer. Interacts (via actin-binding domain) with SYNE3. Interacts (via calponin-homology (CH) 1 domain) with VIM (via rod region). Interacts (via N-terminus) with DST isoform 2 (via N-terminus). Interacts with FER. Interacts with TOR1A. Interacts with ANK3. Identified in complexes that contain VIM, EZR, AHNAK, BFSP1, BFSP2, ANK2, PLEC, PRX and spectrin. Post-translationally, phosphorylated by CDK1; regulates dissociation from intermediate filaments during mitosis.

The protein localises to the cytoplasm. The protein resides in the cytoskeleton. Its subcellular location is the cell junction. It localises to the hemidesmosome. It is found in the cell projection. The protein localises to the podosome. In terms of biological role, interlinks intermediate filaments with microtubules and microfilaments and anchors intermediate filaments to desmosomes or hemidesmosomes. May be involved not only in the cross-linking and stabilization of cytoskeletal intermediate filaments network, but also in the regulation of their dynamics. This is Plectin (PLEC) from Cricetulus griseus (Chinese hamster).